The sequence spans 353 residues: Phosphate acyltransferase (353 aa).

Belongs to the PlsX family. In terms of assembly, homodimer. Probably interacts with PlsY.

The protein resides in the cytoplasm. It catalyses the reaction a fatty acyl-[ACP] + phosphate = an acyl phosphate + holo-[ACP]. Its pathway is lipid metabolism; phospholipid metabolism. Functionally, catalyzes the reversible formation of acyl-phosphate (acyl-PO(4)) from acyl-[acyl-carrier-protein] (acyl-ACP). This enzyme utilizes acyl-ACP as fatty acyl donor, but not acyl-CoA. This is Phosphate acyltransferase from Rhodopseudomonas palustris (strain ATCC BAA-98 / CGA009).